A 195-amino-acid polypeptide reads, in one-letter code: Peptidyl-tRNA hydrolase (195 aa).

Residue Y18 coordinates tRNA. H23 (proton acceptor) is an active-site residue. Y69, N71, and N117 together coordinate tRNA.

It belongs to the PTH family. Monomer.

The protein localises to the cytoplasm. The catalysed reaction is an N-acyl-L-alpha-aminoacyl-tRNA + H2O = an N-acyl-L-amino acid + a tRNA + H(+). In terms of biological role, hydrolyzes ribosome-free peptidyl-tRNAs (with 1 or more amino acids incorporated), which drop off the ribosome during protein synthesis, or as a result of ribosome stalling. Catalyzes the release of premature peptidyl moieties from peptidyl-tRNA molecules trapped in stalled 50S ribosomal subunits, and thus maintains levels of free tRNAs and 50S ribosomes. This is Peptidyl-tRNA hydrolase from Nitrosomonas europaea (strain ATCC 19718 / CIP 103999 / KCTC 2705 / NBRC 14298).